Here is a 262-residue protein sequence, read N- to C-terminus: 27 kDa lipoprotein antigen (262 aa).

The signal sequence occupies residues 1–28; sequence MSASCAVPRLTRFAVFAVAGATALSLSA. Low complexity-rich tracts occupy residues 28-57 and 148-158; these read ACGSSNKSSSTSTSTSTSTSTVTSAAPSST and STPGGASSTPP. Disordered stretches follow at residues 28–60 and 138–171; these read ACGSSNKSSSTSTSTSTSTSTVTSAAPSSTPNA and VNGTCPKPHESTPGGASSTPPSGSPSPAPAKPAW. Residue cysteine 29 is the site of N-palmitoyl cysteine attachment. A lipid anchor (S-diacylglycerol cysteine) is attached at cysteine 29.

The protein localises to the cell membrane. In Mycobacterium intracellulare, this protein is 27 kDa lipoprotein antigen (Mi43).